Reading from the N-terminus, the 332-residue chain is Glycerol-3-phosphate dehydrogenase [NAD(P)+] (332 aa).

4 residues coordinate NADPH: Ser11, Phe12, Lys32, and Lys106. Residues Lys106, Gly137, and Ser139 each contribute to the sn-glycerol 3-phosphate site. Ala141 contributes to the NADPH binding site. Sn-glycerol 3-phosphate is bound by residues Lys192, Asp245, Ser255, Arg256, and Asn257. The Proton acceptor role is filled by Lys192. Arg256 lines the NADPH pocket. Residues Val280 and Glu282 each coordinate NADPH.

This sequence belongs to the NAD-dependent glycerol-3-phosphate dehydrogenase family.

It localises to the cytoplasm. It catalyses the reaction sn-glycerol 3-phosphate + NAD(+) = dihydroxyacetone phosphate + NADH + H(+). The catalysed reaction is sn-glycerol 3-phosphate + NADP(+) = dihydroxyacetone phosphate + NADPH + H(+). It participates in membrane lipid metabolism; glycerophospholipid metabolism. Its function is as follows. Catalyzes the reduction of the glycolytic intermediate dihydroxyacetone phosphate (DHAP) to sn-glycerol 3-phosphate (G3P), the key precursor for phospholipid synthesis. The polypeptide is Glycerol-3-phosphate dehydrogenase [NAD(P)+] (Staphylococcus aureus (strain bovine RF122 / ET3-1)).